The chain runs to 156 residues: Adult-specific rigid cuticular protein 15.5 (156 aa).

The Chitin-binding type R&amp;R domain occupies 23–84 (IGNYAFNYGT…SVKTNEPGTA (62 aa)).

In terms of biological role, component of the rigid cuticle of the spider. The chain is Adult-specific rigid cuticular protein 15.5 from Araneus diadematus (European garden spider).